We begin with the raw amino-acid sequence, 157 residues long: Small ribosomal subunit protein uS7c (157 aa).

It belongs to the universal ribosomal protein uS7 family. As to quaternary structure, part of the 30S ribosomal subunit.

It is found in the plastid. Its subcellular location is the organellar chromatophore. Its function is as follows. One of the primary rRNA binding proteins, it binds directly to 16S rRNA where it nucleates assembly of the head domain of the 30S subunit. The chain is Small ribosomal subunit protein uS7c (rps7) from Paulinella chromatophora.